The primary structure comprises 238 residues: ATP synthase subunit a (238 aa).

The next 5 helical transmembrane spans lie at Leu17 to Cys37, Phe75 to Pro95, Asp112 to Ile132, Tyr172 to Ile192, and Ile194 to Ile214.

Belongs to the ATPase A chain family. As to quaternary structure, F-type ATPases have 2 components, CF(1) - the catalytic core - and CF(0) - the membrane proton channel. CF(1) has five subunits: alpha(3), beta(3), gamma(1), delta(1), epsilon(1). CF(0) has three main subunits: a(1), b(2) and c(9-12). The alpha and beta chains form an alternating ring which encloses part of the gamma chain. CF(1) is attached to CF(0) by a central stalk formed by the gamma and epsilon chains, while a peripheral stalk is formed by the delta and b chains.

The protein resides in the cell membrane. Functionally, key component of the proton channel; it plays a direct role in the translocation of protons across the membrane. This Listeria monocytogenes serovar 1/2a (strain ATCC BAA-679 / EGD-e) protein is ATP synthase subunit a.